A 274-amino-acid chain; its full sequence is Undecaprenyl-diphosphatase (274 aa).

The next 7 membrane-spanning stretches (helical) occupy residues I4–I24, L46–Y63, K82–G102, L109–A129, A184–L204, M218–L238, and F249–V269.

Belongs to the UppP family.

Its subcellular location is the cell inner membrane. The enzyme catalyses di-trans,octa-cis-undecaprenyl diphosphate + H2O = di-trans,octa-cis-undecaprenyl phosphate + phosphate + H(+). In terms of biological role, catalyzes the dephosphorylation of undecaprenyl diphosphate (UPP). Confers resistance to bacitracin. The chain is Undecaprenyl-diphosphatase from Dechloromonas aromatica (strain RCB).